A 1938-amino-acid chain; its full sequence is Myosin-1 (1938 aa).

Residues 1 to 27 are disordered; the sequence is MSLEHEKDPGWQYLKRSREQQLADQSR. Over residues 16–27 the composition is skewed to basic and acidic residues; sequence RSREQQLADQSR. Residues 30-80 form the Myosin N-terminal SH3-like domain; that stretch reads DSKKNVWIPDAEEGYIEGVIKGPGPKADTVIVTAGGKDVTLKKDIVQEVNP. Residues 84–785 form the Myosin motor domain; that stretch reads EKTEDMSNLT…VVAHIEDLRD (702 aa). Lys-128 is subject to N6,N6,N6-trimethyllysine. Residue 177–184 coordinates ATP; the sequence is GESGAGKT. 2 actin-binding regions span residues 660–682 and 764–778; these read LNKLMTMLHKTHPHFIRCIIPNE and RIGHTKVFFKAGVVA. The interval 846–1170 is alpha-helical tailpiece (short S2); sequence QLKCGKMAEE…NKQLEIQQDN (325 aa). Positions 846–1938 are rodlike tail (S2 and LMM domains); that stretch reads QLKCGKMAEE…GQVVRSATNK (1093 aa). Residues 846–1938 are a coiled coil; sequence QLKCGKMAEE…GQVVRSATNK (1093 aa). The disordered stretch occupies residues 919 to 951; that stretch reads RQEVEKSLNDANDRLSEHEEKNADLEKQRRKAQ. Residues 920–951 are compositionally biased toward basic and acidic residues; the sequence is QEVEKSLNDANDRLSEHEEKNADLEKQRRKAQ. The segment at 1171-1938 is light meromyosin (LMM); that stretch reads NKKKDSEIIK…GQVVRSATNK (768 aa).

It belongs to the TRAFAC class myosin-kinesin ATPase superfamily. Myosin family. As to quaternary structure, muscle myosin is a hexameric protein that consists of 2 heavy chain subunits (MHC), 2 alkali light chain subunits (MLC) and 2 regulatory light chain subunits (MLC-2). Interacts with itr-1 (via c-terminal coiled coil domain). Found exclusively in the pharyngeal muscle.

It is found in the cytoplasm. The protein localises to the myofibril. In terms of biological role, muscle contraction. This chain is Myosin-1, found in Caenorhabditis elegans.